Reading from the N-terminus, the 287-residue chain is uncharacterized protein (287 aa).

GTP contacts are provided by residues 43 to 50 (GKTGVGKS), 90 to 93 (DLPG), and 156 to 159 (DKAE). The G domain occupies 48-138 (GKSSLCNALF…LTVDEHFYHQ (91 aa)).

It to E.coli YfjP and YeeP.

This is an uncharacterized protein from Escherichia coli (strain K12).